The following is a 208-amino-acid chain: Probable adenylyl-sulfate kinase (208 aa).

38 to 45 (GLSGSGKS) contacts ATP. The Phosphoserine intermediate role is filled by Ser-112.

Belongs to the APS kinase family.

It carries out the reaction adenosine 5'-phosphosulfate + ATP = 3'-phosphoadenylyl sulfate + ADP + H(+). It functions in the pathway sulfur metabolism; hydrogen sulfide biosynthesis; sulfite from sulfate: step 2/3. Its function is as follows. Catalyzes the synthesis of activated sulfate. This Halalkalibacterium halodurans (strain ATCC BAA-125 / DSM 18197 / FERM 7344 / JCM 9153 / C-125) (Bacillus halodurans) protein is Probable adenylyl-sulfate kinase.